Here is an 875-residue protein sequence, read N- to C-terminus: Probable inorganic carbon transporter subunit DabA (875 aa).

The Zn(2+) site is built by cysteine 380, aspartate 382, histidine 563, and cysteine 578.

The protein belongs to the inorganic carbon transporter (TC 9.A.2) DabA family. Forms a complex with DabB. Requires Zn(2+) as cofactor.

The protein resides in the cell membrane. Functionally, part of an energy-coupled inorganic carbon pump. This Geobacillus thermodenitrificans (strain NG80-2) protein is Probable inorganic carbon transporter subunit DabA.